The sequence spans 170 residues: Cysteine-rich uncharacterized protein 241L (170 aa).

This is Cysteine-rich uncharacterized protein 241L from Acheta domesticus (House cricket).